The primary structure comprises 297 residues: Acetylglutamate kinase (297 aa).

Substrate is bound by residues 73 to 74 (GG), Arg-95, and Asn-188.

This sequence belongs to the acetylglutamate kinase family. ArgB subfamily.

It localises to the cytoplasm. The catalysed reaction is N-acetyl-L-glutamate + ATP = N-acetyl-L-glutamyl 5-phosphate + ADP. It functions in the pathway amino-acid biosynthesis; L-arginine biosynthesis; N(2)-acetyl-L-ornithine from L-glutamate: step 2/4. In terms of biological role, catalyzes the ATP-dependent phosphorylation of N-acetyl-L-glutamate. This Nostoc sp. (strain PCC 7120 / SAG 25.82 / UTEX 2576) protein is Acetylglutamate kinase.